The following is a 365-amino-acid chain: Chaperone protein DnaJ (365 aa).

The region spanning 5-71 (DFYEILGIAK…QKRQAYDQFG (67 aa)) is the J domain. The segment at 128 to 206 (GTTVKIRIPK…CHGKGVVHKQ (79 aa)) adopts a CR-type zinc-finger fold. Positions 141, 144, 158, 161, 180, 183, 194, and 197 each coordinate Zn(2+). CXXCXGXG motif repeat units lie at residues 141–148 (CDTCSGTG), 158–165 (CLTCGGAG), 180–187 (CNACSGTG), and 194–201 (CNNCHGKG).

The protein belongs to the DnaJ family. In terms of assembly, homodimer. Requires Zn(2+) as cofactor.

The protein localises to the cytoplasm. Participates actively in the response to hyperosmotic and heat shock by preventing the aggregation of stress-denatured proteins and by disaggregating proteins, also in an autonomous, DnaK-independent fashion. Unfolded proteins bind initially to DnaJ; upon interaction with the DnaJ-bound protein, DnaK hydrolyzes its bound ATP, resulting in the formation of a stable complex. GrpE releases ADP from DnaK; ATP binding to DnaK triggers the release of the substrate protein, thus completing the reaction cycle. Several rounds of ATP-dependent interactions between DnaJ, DnaK and GrpE are required for fully efficient folding. Also involved, together with DnaK and GrpE, in the DNA replication of plasmids through activation of initiation proteins. The chain is Chaperone protein DnaJ from Vesicomyosocius okutanii subsp. Calyptogena okutanii (strain HA).